The primary structure comprises 452 residues: Putative zinc metalloprotease VC_2253 (452 aa).

Zn(2+) is bound at residue H22. Residue E23 is part of the active site. H26 provides a ligand contact to Zn(2+). The chain crosses the membrane as a helical span at residues 98–120 (SAIVSAGPIFNFLFAIFAYWLVF). Positions 197–292 (NLRDWNFDPE…QVELTLIPDS (96 aa)) constitute a PDZ domain. The next 2 membrane-spanning stretches (helical) occupy residues 378 to 400 (FVYF…LVPL) and 428 to 447 (MGYR…AIFN).

The protein belongs to the peptidase M50B family. Requires Zn(2+) as cofactor.

It is found in the cell inner membrane. This Vibrio cholerae serotype O1 (strain ATCC 39315 / El Tor Inaba N16961) protein is Putative zinc metalloprotease VC_2253.